Here is a 376-residue protein sequence, read N- to C-terminus: Cobalt-precorrin-5B C(1)-methyltransferase (376 aa).

This sequence belongs to the CbiD family.

The catalysed reaction is Co-precorrin-5B + S-adenosyl-L-methionine = Co-precorrin-6A + S-adenosyl-L-homocysteine. It functions in the pathway cofactor biosynthesis; adenosylcobalamin biosynthesis; cob(II)yrinate a,c-diamide from sirohydrochlorin (anaerobic route): step 6/10. Its function is as follows. Catalyzes the methylation of C-1 in cobalt-precorrin-5B to form cobalt-precorrin-6A. This chain is Cobalt-precorrin-5B C(1)-methyltransferase, found in Bradyrhizobium sp. (strain BTAi1 / ATCC BAA-1182).